A 327-amino-acid polypeptide reads, in one-letter code: L-lactate dehydrogenase (327 aa).

NAD(+) contacts are provided by residues valine 18, aspartate 39, lysine 44, tyrosine 69, and glycine 83–alanine 84. Substrate contacts are provided by residues glutamine 86, arginine 92, and asparagine 124 to aspartate 127. Residues alanine 122–asparagine 124 and serine 147 contribute to the NAD(+) site. Position 152–155 (aspartate 152–arginine 155) interacts with substrate. Residues arginine 157 and histidine 172 each contribute to the beta-D-fructose 1,6-bisphosphate site. Catalysis depends on histidine 179, which acts as the Proton acceptor. At tyrosine 224 the chain carries Phosphotyrosine. Threonine 233 serves as a coordination point for substrate.

This sequence belongs to the LDH/MDH superfamily. LDH family. In terms of assembly, homotetramer.

It is found in the cytoplasm. The catalysed reaction is (S)-lactate + NAD(+) = pyruvate + NADH + H(+). Its pathway is fermentation; pyruvate fermentation to lactate; (S)-lactate from pyruvate: step 1/1. Its activity is regulated as follows. Allosterically activated by fructose 1,6-bisphosphate (FBP). Its function is as follows. Catalyzes the conversion of lactate to pyruvate. The protein is L-lactate dehydrogenase of Streptococcus pyogenes serotype M3 (strain SSI-1).